Consider the following 421-residue polypeptide: 3-phosphoshikimate 1-carboxyvinyltransferase (421 aa).

Residues K19, S20, and R24 each coordinate 3-phosphoshikimate. K19 contacts phosphoenolpyruvate. Phosphoenolpyruvate is bound by residues G88 and R116. 3-phosphoshikimate is bound by residues S160, Q162, D307, and K334. Q162 contributes to the phosphoenolpyruvate binding site. D307 functions as the Proton acceptor in the catalytic mechanism. Residues R338 and R380 each contribute to the phosphoenolpyruvate site.

It belongs to the EPSP synthase family. In terms of assembly, monomer.

It is found in the cytoplasm. It catalyses the reaction 3-phosphoshikimate + phosphoenolpyruvate = 5-O-(1-carboxyvinyl)-3-phosphoshikimate + phosphate. It functions in the pathway metabolic intermediate biosynthesis; chorismate biosynthesis; chorismate from D-erythrose 4-phosphate and phosphoenolpyruvate: step 6/7. Catalyzes the transfer of the enolpyruvyl moiety of phosphoenolpyruvate (PEP) to the 5-hydroxyl of shikimate-3-phosphate (S3P) to produce enolpyruvyl shikimate-3-phosphate and inorganic phosphate. The chain is 3-phosphoshikimate 1-carboxyvinyltransferase from Thermotoga sp. (strain RQ2).